The chain runs to 181 residues: Ubiquitin-like protein 4B (181 aa).

The 76-residue stretch at 1–76 (MWLTVKLLLG…LNVIIRPLEK (76 aa)) folds into the Ubiquitin-like domain. A disordered region spans residues 139-181 (PEGKHSGATGSTRESKGDMEPRRNMKCNLAHKDGFKREKSPGK). Basic and acidic residues-rich tracts occupy residues 151–161 (RESKGDMEPRR) and 168–181 (AHKDGFKREKSPGK).

It is found in the cytoplasm. This chain is Ubiquitin-like protein 4B (UBL4B), found in Monodelphis domestica (Gray short-tailed opossum).